The chain runs to 144 residues: Gastric inhibitory polypeptide (144 aa).

Positions 1 to 21 (MVALKTCSLLLVLLFLAVGLG) are cleaved as a signal peptide. 2 consecutive propeptides follow at residues 22–42 (EKEE…PRGP) and 87–144 (EARA…LRSQ). The segment at 94-113 (AGQSQGKEDKEAQESSLPKS) is disordered.

The protein belongs to the glucagon family.

The protein localises to the secreted. Its function is as follows. Potent stimulator of insulin secretion and relatively poor inhibitor of gastric acid secretion. The chain is Gastric inhibitory polypeptide (Gip) from Mus musculus (Mouse).